We begin with the raw amino-acid sequence, 241 residues long: ATP synthase subunit a (241 aa).

The next 5 membrane-spanning stretches (helical) occupy residues 30–50, 89–109, 128–148, 193–213, and 214–234; these read GQVF…VLVG, LPFI…GALI, INTT…AGLS, LAVG…VMLL, and GLFT…FYIG.

The protein belongs to the ATPase A chain family. In terms of assembly, F-type ATPases have 2 components, CF(1) - the catalytic core - and CF(0) - the membrane proton channel. CF(1) has five subunits: alpha(3), beta(3), gamma(1), delta(1), epsilon(1). CF(0) has four main subunits: a, b, b' and c.

It is found in the cellular thylakoid membrane. Functionally, key component of the proton channel; it plays a direct role in the translocation of protons across the membrane. In Synechococcus sp. (strain CC9902), this protein is ATP synthase subunit a.